The primary structure comprises 255 residues: Thiazole synthase (255 aa).

The active-site Schiff-base intermediate with DXP is lysine 96. 1-deoxy-D-xylulose 5-phosphate is bound by residues glycine 157, 183–184 (AG), and 205–206 (NT).

It belongs to the ThiG family. As to quaternary structure, homotetramer. Forms heterodimers with either ThiH or ThiS.

The protein resides in the cytoplasm. It catalyses the reaction [ThiS sulfur-carrier protein]-C-terminal-Gly-aminoethanethioate + 2-iminoacetate + 1-deoxy-D-xylulose 5-phosphate = [ThiS sulfur-carrier protein]-C-terminal Gly-Gly + 2-[(2R,5Z)-2-carboxy-4-methylthiazol-5(2H)-ylidene]ethyl phosphate + 2 H2O + H(+). Its pathway is cofactor biosynthesis; thiamine diphosphate biosynthesis. Catalyzes the rearrangement of 1-deoxy-D-xylulose 5-phosphate (DXP) to produce the thiazole phosphate moiety of thiamine. Sulfur is provided by the thiocarboxylate moiety of the carrier protein ThiS. In vitro, sulfur can be provided by H(2)S. The chain is Thiazole synthase from Bacillus licheniformis (strain ATCC 14580 / DSM 13 / JCM 2505 / CCUG 7422 / NBRC 12200 / NCIMB 9375 / NCTC 10341 / NRRL NRS-1264 / Gibson 46).